The sequence spans 443 residues: COP9 signalosome complex subunit 2 (443 aa).

A PCI domain is found at 254-416 (AHTDFFEAFK…QLLELDHQKR (163 aa)).

Belongs to the CSN2 family. As to quaternary structure, component of the CSN complex, probably composed of cops1, cops2, cops3, cops4, cops5, cops6, cops7, cops8 and cops9.

Its subcellular location is the cytoplasm. The protein localises to the nucleus. In terms of biological role, essential component of the COP9 signalosome complex (CSN), a complex involved in various cellular and developmental processes. The CSN complex is an essential regulator of the ubiquitin (Ubl) conjugation pathway by mediating the deneddylation of the cullin subunits of E3 ligase complexes, leading to modify the Ubl ligase activity. This is COP9 signalosome complex subunit 2 (cops2) from Danio rerio (Zebrafish).